Here is a 474-residue protein sequence, read N- to C-terminus: ATP synthase subunit beta (474 aa).

Residue 153-160 (GGAGVGKT) participates in ATP binding.

This sequence belongs to the ATPase alpha/beta chains family. As to quaternary structure, F-type ATPases have 2 components, CF(1) - the catalytic core - and CF(0) - the membrane proton channel. CF(1) has five subunits: alpha(3), beta(3), gamma(1), delta(1), epsilon(1). CF(0) has three main subunits: a(1), b(2) and c(9-12). The alpha and beta chains form an alternating ring which encloses part of the gamma chain. CF(1) is attached to CF(0) by a central stalk formed by the gamma and epsilon chains, while a peripheral stalk is formed by the delta and b chains.

The protein localises to the cell inner membrane. It catalyses the reaction ATP + H2O + 4 H(+)(in) = ADP + phosphate + 5 H(+)(out). Its function is as follows. Produces ATP from ADP in the presence of a proton gradient across the membrane. The catalytic sites are hosted primarily by the beta subunits. The chain is ATP synthase subunit beta from Rickettsia typhi (strain ATCC VR-144 / Wilmington).